Consider the following 643-residue polypeptide: Phosphomethylpyrimidine synthase (643 aa).

Residues Asn-248, Met-277, Tyr-306, His-342, 362–364, 403–406, and Glu-442 each bind substrate; these read SRG and DGLR. Residue His-446 coordinates Zn(2+). Tyr-469 serves as a coordination point for substrate. His-510 is a binding site for Zn(2+). The [4Fe-4S] cluster site is built by Cys-590, Cys-593, and Cys-598.

Belongs to the ThiC family. Homodimer. [4Fe-4S] cluster is required as a cofactor.

It carries out the reaction 5-amino-1-(5-phospho-beta-D-ribosyl)imidazole + S-adenosyl-L-methionine = 4-amino-2-methyl-5-(phosphooxymethyl)pyrimidine + CO + 5'-deoxyadenosine + formate + L-methionine + 3 H(+). The protein operates within cofactor biosynthesis; thiamine diphosphate biosynthesis. Its function is as follows. Catalyzes the synthesis of the hydroxymethylpyrimidine phosphate (HMP-P) moiety of thiamine from aminoimidazole ribotide (AIR) in a radical S-adenosyl-L-methionine (SAM)-dependent reaction. The sequence is that of Phosphomethylpyrimidine synthase from Paraburkholderia phymatum (strain DSM 17167 / CIP 108236 / LMG 21445 / STM815) (Burkholderia phymatum).